The following is a 109-amino-acid chain: uncharacterized protein (109 aa).

Residues 26-48 form a helical membrane-spanning segment; that stretch reads VTSIMTVSDINYLLLYLIILLTL.

The protein localises to the membrane. This is an uncharacterized protein from Saccharomyces cerevisiae (strain ATCC 204508 / S288c) (Baker's yeast).